A 618-amino-acid chain; its full sequence is 1-deoxy-D-xylulose-5-phosphate synthase (618 aa).

Thiamine diphosphate is bound by residues His70 and 111–113 (GHS). Asp142 provides a ligand contact to Mg(2+). Residues 143–144 (GS), Asn171, Tyr278, and Glu360 each bind thiamine diphosphate. Mg(2+) is bound at residue Asn171.

This sequence belongs to the transketolase family. DXPS subfamily. As to quaternary structure, homodimer. Mg(2+) serves as cofactor. It depends on thiamine diphosphate as a cofactor.

The catalysed reaction is D-glyceraldehyde 3-phosphate + pyruvate + H(+) = 1-deoxy-D-xylulose 5-phosphate + CO2. Its pathway is metabolic intermediate biosynthesis; 1-deoxy-D-xylulose 5-phosphate biosynthesis; 1-deoxy-D-xylulose 5-phosphate from D-glyceraldehyde 3-phosphate and pyruvate: step 1/1. Functionally, catalyzes the acyloin condensation reaction between C atoms 2 and 3 of pyruvate and glyceraldehyde 3-phosphate to yield 1-deoxy-D-xylulose-5-phosphate (DXP). This is 1-deoxy-D-xylulose-5-phosphate synthase from Helicobacter pylori (strain G27).